Here is a 174-residue protein sequence, read N- to C-terminus: Cytochrome c oxidase subunit 5A, mitochondrial (174 aa).

The N-terminal 29 residues, 1–29 (MASLTRAVTRLAIAGRQAVRTIATTTPVS), are a transit peptide targeting the mitochondrion.

The protein belongs to the cytochrome c oxidase subunit 5A family. Component of the cytochrome c oxidase (complex IV, CIV), a multisubunit enzyme composed of a catalytic core of 3 subunits and several supernumerary subunits. The complex exists as a monomer or a dimer and forms supercomplexes (SCs) in the inner mitochondrial membrane with ubiquinol-cytochrome c oxidoreductase (cytochrome b-c1 complex, complex III, CIII).

The protein localises to the mitochondrion inner membrane. The protein operates within energy metabolism; oxidative phosphorylation. Component of the cytochrome c oxidase, the last enzyme in the mitochondrial electron transport chain which drives oxidative phosphorylation. The respiratory chain contains 3 multisubunit complexes succinate dehydrogenase (complex II, CII), ubiquinol-cytochrome c oxidoreductase (cytochrome b-c1 complex, complex III, CIII) and cytochrome c oxidase (complex IV, CIV), that cooperate to transfer electrons derived from NADH and succinate to molecular oxygen, creating an electrochemical gradient over the inner membrane that drives transmembrane transport and the ATP synthase. Cytochrome c oxidase is the component of the respiratory chain that catalyzes the reduction of oxygen to water. Electrons originating from reduced cytochrome c in the intermembrane space (IMS) are transferred via the dinuclear copper A center (CU(A)) of subunit 2 and heme A of subunit 1 to the active site in subunit 1, a binuclear center (BNC) formed by heme A3 and copper B (CU(B)). The BNC reduces molecular oxygen to 2 water molecules using 4 electrons from cytochrome c in the IMS and 4 protons from the mitochondrial matrix. The sequence is that of Cytochrome c oxidase subunit 5A, mitochondrial from Caenorhabditis elegans.